Reading from the N-terminus, the 118-residue chain is Basic phospholipase A2 acanthin-2 (118 aa).

7 disulfides stabilise this stretch: Cys11–Cys71, Cys27–Cys117, Cys29–Cys45, Cys44–Cys98, Cys51–Cys91, Cys60–Cys84, and Cys78–Cys89. The Ca(2+) site is built by Tyr28, Gly30, and Gly32. The active site involves His48. Asp49 provides a ligand contact to Ca(2+). Residue Asp92 is part of the active site.

Requires Ca(2+) as cofactor. Expressed by the venom gland.

Its subcellular location is the secreted. It catalyses the reaction a 1,2-diacyl-sn-glycero-3-phosphocholine + H2O = a 1-acyl-sn-glycero-3-phosphocholine + a fatty acid + H(+). Functionally, snake venom phospholipase A2 (PLA2) that potently inhibits ADP-(IC(50)=12 nM) and collagen-induced (IC(50)=4 nM) platelet aggregation when tested on human whole blood. PLA2 catalyzes the calcium-dependent hydrolysis of the 2-acyl groups in 3-sn-phosphoglycerides. The polypeptide is Basic phospholipase A2 acanthin-2 (Acanthophis antarcticus (Common death adder)).